Here is a 741-residue protein sequence, read N- to C-terminus: Hemolysin (741 aa).

The signal sequence occupies residues 1–25 (MPKLNRCAIAIFTILSAISSPTLLA). Residues 26–157 (NINEPSGEAA…RSGFASPAPA (132 aa)) constitute a propeptide that is removed on maturation. 3 disulfide bridges follow: C182–C200, C497–C511, and C537–C549. Positions 484 to 575 (RPVNLQLASF…LTNVYSGESL (92 aa)) constitute a Ricin B-type lectin domain. Residues 607-741 (NAQESSPILG…LVKGVQFDLN (135 aa)) form a beta-prism domain region.

This sequence belongs to the HlyA hemolysin family. As to quaternary structure, monomer. Homoheptamer. After binding to target membranes the protein assembles into a heptameric pre-pore complex. Proteolytic cleavage triggers a conformation change that is required for membrane insertion and pore formation. Proteolytical cleavage is required to convert the 80 kDa hemolysin precursor into the active 65 kDa hemolysin.

It is found in the secreted. It localises to the host cell membrane. Functionally, bacterial hemolysin that causes cytolysis by forming heptameric pores in target host membranes. The chain is Hemolysin (hlyA) from Vibrio cholerae serotype O1 (strain ATCC 39315 / El Tor Inaba N16961).